The following is a 297-amino-acid chain: HTH-type transcriptional regulator ArgP (297 aa).

The HTH lysR-type domain maps to 4–60 (PDYRTLQALDAVIRERGFERAAQKLCITQSAVSQRIKQLENLFGQPLLVRTIPPRPT). A DNA-binding region (H-T-H motif) is located at residues 21–40 (FERAAQKLCITQSAVSQRIK).

It belongs to the LysR transcriptional regulatory family. In terms of assembly, homodimer.

Controls the transcription of genes involved in arginine and lysine metabolism. The polypeptide is HTH-type transcriptional regulator ArgP (Pectobacterium atrosepticum (strain SCRI 1043 / ATCC BAA-672) (Erwinia carotovora subsp. atroseptica)).